Consider the following 418-residue polypeptide: Probable serine/threonine-protein kinase nek2 (418 aa).

One can recognise a Protein kinase domain in the interval 4-264 (YEILGALGKG…VNELLGYSFI (261 aa)). ATP contacts are provided by residues 10-18 (LGKGSFGVV) and lysine 33. Aspartate 135 functions as the Proton acceptor in the catalytic mechanism. Residues 278–363 (QGLKQMDEDL…SNLSLNCNNS (86 aa)) are a coiled coil.

The protein belongs to the protein kinase superfamily. NEK Ser/Thr protein kinase family. NIMA subfamily.

It catalyses the reaction L-seryl-[protein] + ATP = O-phospho-L-seryl-[protein] + ADP + H(+). The catalysed reaction is L-threonyl-[protein] + ATP = O-phospho-L-threonyl-[protein] + ADP + H(+). Involved in centrosome biogenesis. Seems to be required for recruitment of centrosomal material and might be involved in de novo centrosome formation. The polypeptide is Probable serine/threonine-protein kinase nek2 (nek2) (Dictyostelium discoideum (Social amoeba)).